Reading from the N-terminus, the 75-residue chain is Neuropeptide-like protein 31 (75 aa).

The first 22 residues, 1–22 (MISTSSILVLVVLLACFMAANA), serve as a signal peptide directing secretion. 5 positions are modified to tyrosine amide: tyrosine 29, tyrosine 39, tyrosine 49, tyrosine 56, and tyrosine 64. The residue at position 73 (tryptophan 73) is a Tryptophan amide.

It belongs to the YARP (YGGW-amide related peptide) family. Expressed in hypoderm.

The protein localises to the secreted. In terms of biological role, antimicrobial peptides that have antifungal activity against D.coniospora. Has weak antibacterial activity against Gram-positive bacteria M.luteus and Gram-negative E.coli. This chain is Neuropeptide-like protein 31 (nlp-31), found in Caenorhabditis elegans.